Consider the following 128-residue polypeptide: MPFLKPSKVSLKRILQGNPPKPIGLTEYGHLLRLVGLREADSKEENERTILKLNEGIIQMHAIERLDTSFIKEPFRTLNHAINAESLPSLPDQEPWNVFQNAKKRDGQYFAVYSKLKDDSSNESPNKQ.

The protein resides in the mitochondrion. This is an uncharacterized protein from Schizosaccharomyces pombe (strain 972 / ATCC 24843) (Fission yeast).